The chain runs to 284 residues: Ribosomal RNA small subunit methyltransferase A (284 aa).

Residues asparagine 27, leucine 29, glycine 54, glutamate 75, aspartate 100, and asparagine 125 each coordinate S-adenosyl-L-methionine.

The protein belongs to the class I-like SAM-binding methyltransferase superfamily. rRNA adenine N(6)-methyltransferase family. RsmA subfamily.

The protein localises to the cytoplasm. It carries out the reaction adenosine(1518)/adenosine(1519) in 16S rRNA + 4 S-adenosyl-L-methionine = N(6)-dimethyladenosine(1518)/N(6)-dimethyladenosine(1519) in 16S rRNA + 4 S-adenosyl-L-homocysteine + 4 H(+). Functionally, specifically dimethylates two adjacent adenosines (A1518 and A1519) in the loop of a conserved hairpin near the 3'-end of 16S rRNA in the 30S particle. May play a critical role in biogenesis of 30S subunits. In Protochlamydia amoebophila (strain UWE25), this protein is Ribosomal RNA small subunit methyltransferase A.